Here is a 25-residue protein sequence, read N- to C-terminus: Acyl carrier protein (25 aa).

One can recognise a Carrier domain in the interval Glu-2–Ala-25.

It belongs to the acyl carrier protein (ACP) family. Post-translationally, 4'-phosphopantetheine is transferred from CoA to a specific serine of apo-ACP by AcpS. This modification is essential for activity because fatty acids are bound in thioester linkage to the sulfhydryl of the prosthetic group.

It is found in the cytoplasm. The protein operates within lipid metabolism; fatty acid biosynthesis. Carrier of the growing fatty acid chain in fatty acid biosynthesis. This is Acyl carrier protein (acpP) from Alcaligenes faecalis.